Here is a 372-residue protein sequence, read N- to C-terminus: Carbamoyl phosphate synthase small chain (372 aa).

The segment at 1 to 179 is CPSase; it reads MRAILALEDG…ALVTGKTLPP (179 aa). L-glutamine contacts are provided by S45, G231, and G233. In terms of domain architecture, Glutamine amidotransferase type-1 spans 183-369; it reads DIVAFDFGIK…RKMIAASKRQ (187 aa). The active-site Nucleophile is the C258. L-glutamine contacts are provided by L259, Q262, N300, G302, and F303. Active-site residues include H342 and E344.

Belongs to the CarA family. In terms of assembly, composed of two chains; the small (or glutamine) chain promotes the hydrolysis of glutamine to ammonia, which is used by the large (or ammonia) chain to synthesize carbamoyl phosphate. Tetramer of heterodimers (alpha,beta)4.

It carries out the reaction hydrogencarbonate + L-glutamine + 2 ATP + H2O = carbamoyl phosphate + L-glutamate + 2 ADP + phosphate + 2 H(+). The catalysed reaction is L-glutamine + H2O = L-glutamate + NH4(+). The protein operates within amino-acid biosynthesis; L-arginine biosynthesis; carbamoyl phosphate from bicarbonate: step 1/1. It functions in the pathway pyrimidine metabolism; UMP biosynthesis via de novo pathway; (S)-dihydroorotate from bicarbonate: step 1/3. Its function is as follows. Small subunit of the glutamine-dependent carbamoyl phosphate synthetase (CPSase). CPSase catalyzes the formation of carbamoyl phosphate from the ammonia moiety of glutamine, carbonate, and phosphate donated by ATP, constituting the first step of 2 biosynthetic pathways, one leading to arginine and/or urea and the other to pyrimidine nucleotides. The small subunit (glutamine amidotransferase) binds and cleaves glutamine to supply the large subunit with the substrate ammonia. This Akkermansia muciniphila (strain ATCC BAA-835 / DSM 22959 / JCM 33894 / BCRC 81048 / CCUG 64013 / CIP 107961 / Muc) protein is Carbamoyl phosphate synthase small chain.